A 303-amino-acid chain; its full sequence is N-acetylmuramic acid 6-phosphate etherase (303 aa).

The SIS domain occupies 60–223 (ATASLQAGGR…STGVMVKLGK (164 aa)). Glu88 (proton donor) is an active-site residue. Glu119 is a catalytic residue.

It belongs to the GCKR-like family. MurNAc-6-P etherase subfamily. As to quaternary structure, homodimer.

It catalyses the reaction N-acetyl-D-muramate 6-phosphate + H2O = N-acetyl-D-glucosamine 6-phosphate + (R)-lactate. It functions in the pathway amino-sugar metabolism; 1,6-anhydro-N-acetylmuramate degradation. Its pathway is amino-sugar metabolism; N-acetylmuramate degradation. The protein operates within cell wall biogenesis; peptidoglycan recycling. Functionally, specifically catalyzes the cleavage of the D-lactyl ether substituent of MurNAc 6-phosphate, producing GlcNAc 6-phosphate and D-lactate. Together with AnmK, is also required for the utilization of anhydro-N-acetylmuramic acid (anhMurNAc) either imported from the medium or derived from its own cell wall murein, and thus plays a role in cell wall recycling. The polypeptide is N-acetylmuramic acid 6-phosphate etherase (Pectobacterium atrosepticum (strain SCRI 1043 / ATCC BAA-672) (Erwinia carotovora subsp. atroseptica)).